A 38-amino-acid polypeptide reads, in one-letter code: Defensin-1 (38 aa).

Intrachain disulfides connect C4-C25, C11-C33, and C15-C35.

The protein resides in the secreted. In terms of biological role, has antibacterial activity against the Gram-positive bacteria L.lactis and S.aureus, and against the Gram-negative bacteria E.coli D32 and V.parahemolyticus. The polypeptide is Defensin-1 (Crassostrea virginica (Eastern oyster)).